A 351-amino-acid chain; its full sequence is uncharacterized protein (351 aa).

The first 27 residues, 1 to 27 (MKNKKRVLIASSLSCAILLLSAATTQA), serve as a signal peptide directing secretion. The tract at residues 27 to 71 (ANSAHKDSQDQNKKEHVDKSQQKDKRNVTNKDKNSTAPDDIGKNG) is disordered. Positions 30-60 (AHKDSQDQNKKEHVDKSQQKDKRNVTNKDKN) are enriched in basic and acidic residues.

This sequence belongs to the aerolysin family.

This is an uncharacterized protein from Staphylococcus aureus (strain USA300).